The chain runs to 242 residues: 1-(5-phosphoribosyl)-5-[(5-phosphoribosylamino)methylideneamino] imidazole-4-carboxamide isomerase (242 aa).

Residue D8 is the Proton acceptor of the active site. The active-site Proton donor is the D129.

This sequence belongs to the HisA/HisF family.

The protein resides in the cytoplasm. The enzyme catalyses 1-(5-phospho-beta-D-ribosyl)-5-[(5-phospho-beta-D-ribosylamino)methylideneamino]imidazole-4-carboxamide = 5-[(5-phospho-1-deoxy-D-ribulos-1-ylimino)methylamino]-1-(5-phospho-beta-D-ribosyl)imidazole-4-carboxamide. It functions in the pathway amino-acid biosynthesis; L-histidine biosynthesis; L-histidine from 5-phospho-alpha-D-ribose 1-diphosphate: step 4/9. In Clostridium botulinum (strain Kyoto / Type A2), this protein is 1-(5-phosphoribosyl)-5-[(5-phosphoribosylamino)methylideneamino] imidazole-4-carboxamide isomerase.